Here is a 704-residue protein sequence, read N- to C-terminus: Polyribonucleotide nucleotidyltransferase (704 aa).

Positions 487 and 493 each coordinate Mg(2+). The 60-residue stretch at 554–613 folds into the KH domain; the sequence is PRLLTIKIHPDKIREVIGKGGSTIQAITKETGTQIDIQDDGTIIIASVNAIAAQAAKSRI. The 69-residue stretch at 623–691 folds into the S1 motif domain; that stretch reads GRIYEGKVAK…KQGRIRLSIK (69 aa).

This sequence belongs to the polyribonucleotide nucleotidyltransferase family. In terms of assembly, component of the RNA degradosome, which is a multiprotein complex involved in RNA processing and mRNA degradation. It depends on Mg(2+) as a cofactor.

The protein resides in the cytoplasm. The catalysed reaction is RNA(n+1) + phosphate = RNA(n) + a ribonucleoside 5'-diphosphate. In terms of biological role, involved in mRNA degradation. Catalyzes the phosphorolysis of single-stranded polyribonucleotides processively in the 3'- to 5'-direction. The sequence is that of Polyribonucleotide nucleotidyltransferase from Xanthomonas campestris pv. campestris (strain 8004).